The chain runs to 461 residues: Putative cytochrome P450 132 (461 aa).

Cys-409 is a binding site for heme.

Belongs to the cytochrome P450 family. Heme serves as cofactor.

This is Putative cytochrome P450 132 (cyp132) from Mycobacterium bovis (strain ATCC BAA-935 / AF2122/97).